The following is an 866-amino-acid chain: Protein aubergine (866 aa).

An N-acetylmethionine modification is found at Met-1. Residues 1–61 (MNLPPNPVIA…GGGDAQVGPS (61 aa)) form a disordered region. 4 positions are modified to symmetric dimethylarginine: Arg-11, Arg-13, Arg-15, and Arg-17. Positions 46–56 (ASGGNGGGGDA) are enriched in gly residues. The PAZ domain maps to 281–390 (TLYNILSDAI…IIPELARATG (110 aa)). Positions 555 to 852 (IVMVVMRSPN…LAFLVAESIN (298 aa)) constitute a Piwi domain.

Belongs to the argonaute family. Piwi subfamily. Component of the ping-pong piRNA processing (4P) complex consisting of krimp, aub and AGO3. Interacts (via N-terminus when symmetrically dimethylated on arginine residues) with krimp (via tudor domain); this interaction requires methylation of at least one N-terminal arginie residue. Interacts with vas and AGO3. May form part of a piRNA processing complex consisting of tud, aub and AGO3. Interacts (when symmetrically dimethylated on arginine residues) with tud; methylation and/or interaction requires association with piRNA. Interacts (via N-terminus and when associated with piRNA) with csul/PRMT5; the interaction recruits the PRMT5 methylosome complex to modify N-terminal arginines by symmetrical dimethylation but involves residues other than the arginines to be modified. Forms a complex with smg, twin, AGO3, nanos mRNA and piRNAs that targets the nanos 3'-untranslated region, in early embryos. Interacts with nanos mRNA and rump (in an RNA-dependent manner). Interacts with papi and vret. Interacts with me31B. In terms of processing, symmetrical dimethylation of arginines (sDMA) on Arg-11, Arg-13 and/or Arg-15 by csul/PRMT5/DART5, is required for binding to tud, localization to the pole plasm and association with the correct piRNAs. SDMA on Arg-11, Arg-13, Arg-15 and/or Arg-17 is required for binding to krimp and stable recruitment to subregions of the nuage. Methylation state does not affect protein stability. SDMA plays an important role in ping-pong amplification of piRNAs and is essential for function in vivo. Methylation state functions as an indicator of its piRNA binding state. PiRNA binding promotes sDMA modification; piRNA binding induces a conformational change that exposes the N-terminal arginines, making them available to the methylosome complex. In terms of tissue distribution, expressed in ovary. In the germarium, found in germline stem and cyst cells. In egg chambers from stage 6, expressed both in nurse cells and oocytes. In embryos, accumulates in the pole cells, although low expression is detected throughout the entire embryo. In testis, expressed in germline stem cells, gonialblast and spermatogonia cells (at protein level). In the adult brain, expressed in the ellipsoid body, the mushroom body subdivision in the peduncle and the cell body layer. Expressed specifically in alpha'/beta' and gamma neurons.

It is found in the cytoplasm. The protein localises to the cytosol. Its subcellular location is the perinuclear region. It localises to the cytoplasmic ribonucleoprotein granule. Component of the perinuclear meiotic nuage, a germline-specific subcellular membraneless ribonucleoprotein compartment involved in production of transposable element-repressing Piwi-interacting RNA (piRNA)-induced silencing complexes (piRISCs), which are essential for maintaining germline integrity during oogenesis; essential for the formation and/or structural integrity of nuage particles. Acts via the Piwi-interacting RNA (piRNA) metabolic process, which mediates the repression of transposable elements during meiosis by forming complexes composed of piRNAs and Piwi proteins and governs the methylation and subsequent repression of transposons. Directly binds piRNAs, a class of 24 to 30 nucleotide RNAs that are generated by a Dicer-independent mechanism and are primarily derived from transposons and other repeated sequence elements. Shows RNA cleavage or slicer activity; including aub-piRNA complexes from ovary and testis. When loaded with guide piRNAs recognizes and cleaves complementary RNAs to repress their expression and produce complementary piRNAs. Together with Piwi protein AGO3 recruited to subregions of the perinuclear nuage by krimp, which coordinates their activity in the ping-pong amplification step of secondary piRNA biogenesis. Krimp recruits piRNA bound aub and unbound AGO3, bringing them into close proximity to facilitate the loading onto AGO3 of freshly cut piRNAs generated by aub cleavage of target sequences; krimp recognizes the piRNA loading state of the Piwi proteins via symmetrically dimethylated arginine modification in their N-terminus. Important for asymmetric ping-pong amplification to bias production towards antisense piRNAs capable of silencing transposable elements. Required for the localization of mael and krimp to the meiotic nuage. In ovary, associates predominantly with antisense piRNAs that contain uridine at their 5' end. In testis, associates with Su(Ste) antisense piRNAs (most abundant class of piRNAs found in complex with aub in testes) and negatively regulates Ste expression, most likely by cleaving its transcripts. Also in testis, may repress translation of vas when associated with a piRNA derived from chromosome X, termed AT-chX-1, whose sequence shows strong complementarity to vas mRNA. Involved in repression of long interspersed nuclear elements (LINEs) including HeT-A, I-element and TART LINEs. Repression of specialized telomeric retroelements HeT-A and TART is involved in telomere regulation; Drosophila telomeres being maintained by transposition of specialized telomeric retroelements. Also involved in telomeric trans-silencing, a repression mechanism by which a transposon or a transgene inserted in subtelomeric heterochromatin has the capacity to repress in trans, in the female germline, a homologous transposon, or transgene located in euchromatin. Involved in the suppression of meiotic drive of sex chromosomes and autosomes. Involved in transposon silencing in the adult brain. Required for dorsal-ventral as well as anterior-posterior patterning of the egg. Required during oogenesis for primordial germ cell formation and activation of RNA interference. During early oogenesis, required for osk mRNA silencing and polarization of the microtubule cytoskeleton. During mid-oogenesis, required for osk mRNA localization to the posterior pole and efficient translation of osk and grk. During embryogenesis, required for posterior localization of nanos (nos) mRNA, independently of osk, and pole cell formation. Forms a complex with smg, twin, AGO3 and specific piRNAs that targets nanos mRNA (and probably other maternal mRNAS) for deadenylation promoting its decay during early embryogenesis. This chain is Protein aubergine, found in Drosophila melanogaster (Fruit fly).